The following is a 233-amino-acid chain: Lipoprotein-releasing system ATP-binding protein LolD (233 aa).

The 228-residue stretch at L6–E233 folds into the ABC transporter domain. G42–S49 is an ATP binding site.

This sequence belongs to the ABC transporter superfamily. Lipoprotein translocase (TC 3.A.1.125) family. In terms of assembly, the complex is composed of two ATP-binding proteins (LolD) and two transmembrane proteins (LolC and LolE).

The protein localises to the cell inner membrane. Part of the ABC transporter complex LolCDE involved in the translocation of mature outer membrane-directed lipoproteins, from the inner membrane to the periplasmic chaperone, LolA. Responsible for the formation of the LolA-lipoprotein complex in an ATP-dependent manner. The polypeptide is Lipoprotein-releasing system ATP-binding protein LolD (Salmonella choleraesuis (strain SC-B67)).